The following is a 1726-amino-acid chain: Transcription elongation factor SPT6 (1726 aa).

Composition is skewed to acidic residues over residues 1–14 (MSDFVESEAEESEE), 32–49 (EEEDDDEEEEEENLDDQD), and 59–80 (NDDDDEEEGEEDEGSDSGDSED). The segment at 1–197 (MSDFVESEAE…DDGQPLKKPK (197 aa)) is disordered. S2 carries the post-translational modification N-acetylserine. The tract at residues 2–485 (SDFVESEAEE…PKMQNAAKAS (484 aa)) is interaction with IWS1. An interaction with PAAF1 region spans residues 2–916 (SDFVESEAEE…PPVLRQAVSL (915 aa)). Residues 3 to 51 (DFVESEAEESEEEYNHEGEVVPRVTKKFVEEEDDDEEEEEENLDDQDER) adopt a coiled-coil conformation. S7 and S12 each carry phosphoserine. Residues S73, S78, and S91 each carry the phosphoserine modification. Residues 95-105 (RLEDDDFDLIE) show a composition bias toward acidic residues. Basic residues predominate over residues 111–122 (KVKRGQKYRRVK). Residue S125 is modified to Phosphoserine. Acidic residues-rich tracts occupy residues 126 to 136 (DDDEDDEEEYG), 150 to 160 (FQDEEGEEGQE), and 169 to 190 (PDEEEEDDEESDIDDFIVDDDG). Residue S267 is modified to Phosphoserine. Positions 317–1300 (ADWIYRNAFA…NEWKLPKDTY (984 aa)) are interaction with KDM6A. A disordered region spans residues 489–520 (LKRIKEDGDEEGEGEEAEDEEQRGPELKQASR). A compositionally biased stretch (acidic residues) spans 495–509 (DGDEEGEGEEAEDEE). Positions 510 to 520 (QRGPELKQASR) are enriched in basic and acidic residues. K743 carries the post-translational modification N6-acetyllysine. In terms of domain architecture, S1 motif spans 1213–1282 (WNHFDSGSCP…EKFSADLTCR (70 aa)). The region spanning 1325-1431 (YIKRVIAHPS…FARDLLNHKY (107 aa)) is the SH2 domain. Y1515 bears the Phosphotyrosine mark. T1523 carries the phosphothreonine modification. The residue at position 1526 (S1526) is a Phosphoserine. A phosphothreonine mark is found at T1530 and T1532. S1535 is subject to Phosphoserine. T1539 carries the phosphothreonine modification. Positions 1633-1726 (PQYHQLQAST…ATPLLDEMDR (94 aa)) are interaction with histone H2B and H3. The disordered stretch occupies residues 1636-1726 (HQLQASTTPQ…ATPLLDEMDR (91 aa)). The segment covering 1639–1664 (QASTTPQSTQAQPQPSSSSRQRQQQP) has biased composition (low complexity). K1676 is subject to N6-acetyllysine. T1697 is modified (phosphothreonine). Residues S1701 and S1703 each carry the phosphoserine modification. Phosphothreonine occurs at positions 1709 and 1718.

It belongs to the SPT6 family. As to quaternary structure, interacts with RNA polymerase II and the DRB sensitivity-inducing factor complex (DSIF complex), which is composed of SUPT5H and SUPT4H1 or SUPT4H2. Interacts with PAAF1. Interacts with histone H2B and H3. Interacts (via SH2 domain) with POLR2A phosphorylated at 'Ser-2'. Interacts (via SH2 domain) with SETD1A. Interacts with IWS1, KDM6A and AICDA. Interacts with WDR43. Post-translationally, dephosphorylated at Ser-1530 by the PNUTS-PP1 complex during RNA polymerase II transcription pause-release. As to expression, ubiquitously expressed.

It is found in the nucleus. Functionally, histone H3-H4 chaperone that plays a key role in the regulation of transcription elongation and mRNA processing. Enhances the transcription elongation by RNA polymerase II (RNAPII) and is also required for the efficient activation of transcriptional elongation by the HIV-1 nuclear transcriptional activator, Tat. Besides chaperoning histones in transcription, acts to transport and splice mRNA by forming a complex with IWS1 and the C-terminal domain (CTD) of the RNAPII subunit RPB1 (POLR2A). The SUPT6H:IWS1:CTD complex recruits mRNA export factors (ALYREF/THOC4, EXOSC10) as well as histone modifying enzymes (such as SETD2), to ensure proper mRNA splicing, efficient mRNA export and elongation-coupled H3K36 methylation, a signature chromatin mark of active transcription. SUPT6H via its association with SETD1A, regulates both class-switch recombination and somatic hypermutation through formation of H3K4me3 epigenetic marks on activation-induced cytidine deaminase (AICDA) target loci. Promotes the activation of the myogenic gene program by entailing erasure of the repressive H3K27me3 epigenetic mark through stabilization of the chromatin interaction of the H3K27 demethylase KDM6A. The chain is Transcription elongation factor SPT6 (Supt6h) from Mus musculus (Mouse).